Reading from the N-terminus, the 391-residue chain is 3-ketoacyl-CoA thiolase (391 aa).

Residue C95 is the Acyl-thioester intermediate of the active site. Active-site proton acceptor residues include H347 and C377.

This sequence belongs to the thiolase-like superfamily. Thiolase family. As to quaternary structure, heterotetramer of two alpha chains (FadB) and two beta chains (FadA).

The protein localises to the cytoplasm. It carries out the reaction an acyl-CoA + acetyl-CoA = a 3-oxoacyl-CoA + CoA. It functions in the pathway lipid metabolism; fatty acid beta-oxidation. Functionally, catalyzes the final step of fatty acid oxidation in which acetyl-CoA is released and the CoA ester of a fatty acid two carbons shorter is formed. This Pseudomonas fluorescens (strain ATCC BAA-477 / NRRL B-23932 / Pf-5) protein is 3-ketoacyl-CoA thiolase.